Here is a 776-residue protein sequence, read N- to C-terminus: Serine/threonine-protein kinase-like protein CCR2 (776 aa).

The signal sequence occupies residues 1 to 22 (MQPNSHIFVIITISSLIITVSA). Topologically, residues 23–432 (YGSTGTIAAA…QKEQREVRRL (410 aa)) are extracellular. Residues N59, N92, N154, N162, N205, N278, N287, and N350 are each glycosylated (N-linked (GlcNAc...) asparagine). One copy of the TNFR-Cys repeat lies at 341–396 (NCGDGWFAFNASILKESELTSLCSFHNLNICLRCGISCLEGYFPSSTCNPNADRVC). 3 disulfides stabilise this stretch: C342–C371, C374–C388, and C378–C396. The N-linked (GlcNAc...) asparagine glycan is linked to N404. The helical transmembrane segment at 433–453 (VIIIGCSVLGFLVMLIGLSFI) threads the bilayer. Residues 454–776 (PKMTKGSKRD…DLIVKSGLTF (323 aa)) are Cytoplasmic-facing. Residues 519 to 776 (FKEFNELGRG…DLIVKSGLTF (258 aa)) enclose the Protein kinase domain. Residues 525–533 (LGRGSFGFV) and K547 contribute to the ATP site. D644 serves as the catalytic Proton acceptor.

It belongs to the protein kinase superfamily. Ser/Thr protein kinase family. In terms of assembly, homodimer. As to expression, expressed in roots, leaves, shoot apical meristems (SAM), and floral buds.

The protein localises to the membrane. It carries out the reaction L-seryl-[protein] + ATP = O-phospho-L-seryl-[protein] + ADP + H(+). It catalyses the reaction L-threonyl-[protein] + ATP = O-phospho-L-threonyl-[protein] + ADP + H(+). In terms of biological role, serine/threonine-protein kinase with low activity. In Arabidopsis thaliana (Mouse-ear cress), this protein is Serine/threonine-protein kinase-like protein CCR2 (CCR2).